Here is a 1380-residue protein sequence, read N- to C-terminus: DNA-directed RNA polymerase subunit beta (1380 aa).

The protein belongs to the RNA polymerase beta chain family. The RNAP catalytic core consists of 2 alpha, 1 beta, 1 beta' and 1 omega subunit. When a sigma factor is associated with the core the holoenzyme is formed, which can initiate transcription.

It carries out the reaction RNA(n) + a ribonucleoside 5'-triphosphate = RNA(n+1) + diphosphate. Its function is as follows. DNA-dependent RNA polymerase catalyzes the transcription of DNA into RNA using the four ribonucleoside triphosphates as substrates. In Ehrlichia canis (strain Jake), this protein is DNA-directed RNA polymerase subunit beta.